Here is a 643-residue protein sequence, read N- to C-terminus: Clathrin interactor 1 (643 aa).

Residues 16-149 (NVVMNYSEIE…QDDDRLREER (134 aa)) form the ENTH domain. R29 contributes to the a 1,2-diacyl-sn-glycero-3-phospho-(1D-myo-inositol-4,5-bisphosphate) binding site. The interaction with VTI1B stretch occupies residues 52 to 54 (FMY). R67 serves as a coordination point for a 1,2-diacyl-sn-glycero-3-phospho-(1D-myo-inositol-4,5-bisphosphate). Interaction with VTI1B regions lie at residues 94 to 96 (SER) and 142 to 153 (DDRLREERKKAK). A phosphoserine mark is found at S163, S166, S173, S205, S210, S227, S245, and S299. The segment at 219–331 (FRRKDREDSP…SSGDLVDLFD (113 aa)) is disordered. A compositionally biased stretch (basic and acidic residues) spans 222 to 239 (KDREDSPERCSDSDEEKK). Positions 300–310 (PDQNASTHTPQ) are enriched in polar residues. T308 carries the post-translational modification Phosphothreonine. The span at 311-323 (SSLKTSVPSSKSS) shows a compositional bias: low complexity. A phosphoserine mark is found at S312 and S642.

Belongs to the epsin family. In terms of assembly, binds clathrin heavy chain and AP-2. Interacts with VTI1B. Interacts with GGA2 (via GAE domain). Interacts with AP1G1 (via GAE domain). Interacts with AP1G2 (via GAE domain).

Its subcellular location is the cytoplasm. It localises to the perinuclear region. The protein resides in the membrane. It is found in the cytoplasmic vesicle. The protein localises to the clathrin-coated vesicle. Functionally, binds to membranes enriched in phosphatidylinositol 4,5-bisphosphate (PtdIns(4,5)P2). May have a role in transport via clathrin-coated vesicles from the trans-Golgi network to endosomes. Stimulates clathrin assembly. In Bos taurus (Bovine), this protein is Clathrin interactor 1 (CLINT1).